The primary structure comprises 232 residues: Putative ABC transporter ATP-binding protein VNG_2317G (232 aa).

The ABC transporter domain maps to 2–231 (LSVRNLVHRY…GALPDAGVRP (230 aa)). 34-41 (GANGSGKT) contacts ATP.

It belongs to the ABC transporter superfamily.

The protein resides in the cell membrane. Probably part of an ABC transporter complex. Responsible for energy coupling to the transport system. The sequence is that of Putative ABC transporter ATP-binding protein VNG_2317G from Halobacterium salinarum (strain ATCC 700922 / JCM 11081 / NRC-1) (Halobacterium halobium).